A 414-amino-acid polypeptide reads, in one-letter code: Zinc metalloproteinase-disintegrin-like batroxstatin-3 (414 aa).

Asn-7 and Asn-70 each carry an N-linked (GlcNAc...) asparagine glycan. The 195-residue stretch at 10 to 204 folds into the Peptidase M12B domain; that stretch reads KYIKLVIVAD…HTPQCILNEP (195 aa). Disulfide bonds link Cys-121–Cys-199, Cys-161–Cys-183, and Cys-163–Cys-168. His-146 serves as a coordination point for Zn(2+). Glu-147 is an active-site residue. 2 residues coordinate Zn(2+): His-150 and His-156. The region spanning 212 to 298 is the Disintegrin domain; that stretch reads PEVCGNYLLE…HCPTDRFHRN (87 aa). Ca(2+) is bound by residues Val-214, Asn-217, Glu-221, Glu-224, and Asp-227. Cystine bridges form between Cys-215/Cys-244, Cys-226/Cys-239, Cys-228/Cys-234, Cys-238/Cys-261, Cys-252/Cys-258, Cys-257/Cys-283, Cys-270/Cys-290, Cys-277/Cys-309, Cys-302/Cys-314, Cys-321/Cys-371, Cys-336/Cys-381, Cys-349/Cys-359, Cys-366/Cys-403, and Cys-397/Cys-408. The D/ECD-tripeptide signature appears at 276–278; the sequence is ECD. Ca(2+) is bound by residues Asp-278, Glu-281, Asp-293, and Arg-294.

The protein belongs to the venom metalloproteinase (M12B) family. P-III subfamily. P-IIIa sub-subfamily. Monomer. Requires Zn(2+) as cofactor. Expressed by the venom gland.

The protein resides in the secreted. Snake venom zinc metalloprotease that induces apoptosis in vascular endothelial cells (VEC), without degrading the extracellular matrix (it cannot cleave collagen) or inhibiting adhesion of VEC. Has also fibrinogenolytic and hemorrhagic activities. The chain is Zinc metalloproteinase-disintegrin-like batroxstatin-3 from Bothrops atrox (Barba amarilla).